The primary structure comprises 300 residues: Ribosomal RNA small subunit methyltransferase H (300 aa).

S-adenosyl-L-methionine contacts are provided by residues 36-38 (GGH), Asp55, Leu89, Asp103, and Gln110.

This sequence belongs to the methyltransferase superfamily. RsmH family.

The protein resides in the cytoplasm. It catalyses the reaction cytidine(1402) in 16S rRNA + S-adenosyl-L-methionine = N(4)-methylcytidine(1402) in 16S rRNA + S-adenosyl-L-homocysteine + H(+). Specifically methylates the N4 position of cytidine in position 1402 (C1402) of 16S rRNA. This chain is Ribosomal RNA small subunit methyltransferase H, found in Thermotoga neapolitana (strain ATCC 49049 / DSM 4359 / NBRC 107923 / NS-E).